Reading from the N-terminus, the 535-residue chain is Putative beta-glucosidase 41 (535 aa).

The signal sequence occupies residues 1–27 (MESLMRLVLVLFPFFVVFFVPLDHVSS). An a beta-D-glucoside-binding site is contributed by glutamine 49. Asparagine 118 carries N-linked (GlcNAc...) asparagine glycosylation. A beta-D-glucoside contacts are provided by residues histidine 151 and 196-197 (NE). Glutamate 197 (proton donor) is an active-site residue. An intrachain disulfide couples cysteine 216 to cysteine 224. Residues tyrosine 340 and glutamate 413 each contribute to the a beta-D-glucoside site. Residue glutamate 413 is the Nucleophile of the active site. Residue asparagine 445 is glycosylated (N-linked (GlcNAc...) asparagine). Residues tryptophan 463, 470–471 (EW), and phenylalanine 479 contribute to the a beta-D-glucoside site. Asparagine 489 carries N-linked (GlcNAc...) asparagine glycosylation.

The protein belongs to the glycosyl hydrolase 1 family.

The catalysed reaction is Hydrolysis of terminal, non-reducing beta-D-glucosyl residues with release of beta-D-glucose.. This is Putative beta-glucosidase 41 from Arabidopsis thaliana (Mouse-ear cress).